The sequence spans 35 residues: ACQGYMRKCGRDKPPCCKKLECSKTWRWCVWNPWE.

3 disulfide bridges follow: cysteine 2–cysteine 17, cysteine 9–cysteine 22, and cysteine 16–cysteine 29.

Belongs to the neurotoxin 10 (Hwtx-1) family. 49 (Jztx-F6) subfamily. In terms of tissue distribution, expressed by the venom gland.

The protein resides in the secreted. Its function is as follows. Probable ion channel inhibitor. The sequence is that of Jingzhaotoxin F6-27.63 from Chilobrachys guangxiensis (Chinese earth tiger tarantula).